The chain runs to 222 residues: UPF0758 protein Mpe_A2695 (222 aa).

Residues 100–222 (VFDSPQAVKD…VVSFAERGLL (123 aa)) form the MPN domain. Residues H171, H173, and D184 each coordinate Zn(2+). Positions 171 to 184 (HNHPSGVAEPSRAD) match the JAMM motif motif.

The protein belongs to the UPF0758 family.

This Methylibium petroleiphilum (strain ATCC BAA-1232 / LMG 22953 / PM1) protein is UPF0758 protein Mpe_A2695.